Reading from the N-terminus, the 196-residue chain is Beta-crystallin A4 (196 aa).

Thr2 carries the post-translational modification N-acetylthreonine. Residues 2-11 (TLQCTKSAGH) are N-terminal arm. 2 Beta/gamma crystallin 'Greek key' domains span residues 12-51 (WRVV…KVLS) and 52-98 (GAWV…RPVA). The segment at 99–104 (CANHRD) is connecting peptide. 2 Beta/gamma crystallin 'Greek key' domains span residues 105–146 (SRLT…HVQS) and 147–195 (GAWV…RRIQ).

As to quaternary structure, homo/heterodimer, or complexes of higher-order. The structure of beta-crystallin oligomers seems to be stabilized through interactions between the N-terminal arms.

In terms of biological role, crystallins are the dominant structural components of the vertebrate eye lens. The polypeptide is Beta-crystallin A4 (Cryba4) (Rattus norvegicus (Rat)).